The chain runs to 455 residues: 3-phosphoshikimate 1-carboxyvinyltransferase (455 aa).

The interval 1-23 (MSHGSNPRPATARKSSDLKGTLR) is disordered. 3-phosphoshikimate contacts are provided by lysine 28, serine 29, and arginine 33. Residue lysine 28 coordinates phosphoenolpyruvate. Phosphoenolpyruvate contacts are provided by glycine 100 and arginine 128. The 3-phosphoshikimate site is built by serine 173, glutamine 175, aspartate 326, and lysine 353. Residue glutamine 175 coordinates phosphoenolpyruvate. Aspartate 326 serves as the catalytic Proton acceptor. Phosphoenolpyruvate-binding residues include arginine 357 and arginine 405.

It belongs to the EPSP synthase family. Monomer.

The protein localises to the cytoplasm. The enzyme catalyses 3-phosphoshikimate + phosphoenolpyruvate = 5-O-(1-carboxyvinyl)-3-phosphoshikimate + phosphate. It participates in metabolic intermediate biosynthesis; chorismate biosynthesis; chorismate from D-erythrose 4-phosphate and phosphoenolpyruvate: step 6/7. Its function is as follows. Catalyzes the transfer of the enolpyruvyl moiety of phosphoenolpyruvate (PEP) to the 5-hydroxyl of shikimate-3-phosphate (S3P) to produce enolpyruvyl shikimate-3-phosphate and inorganic phosphate. The protein is 3-phosphoshikimate 1-carboxyvinyltransferase of Rhizobium meliloti (strain 1021) (Ensifer meliloti).